A 353-amino-acid chain; its full sequence is Inositol 3-kinase (353 aa).

ATP contacts are provided by residues Ser-197, 247-250 (GAGD), and Asn-274. The active-site Proton acceptor is Asp-250.

Belongs to the carbohydrate kinase pfkB family.

The enzyme catalyses myo-inositol + ATP = 1D-myo-inositol 3-phosphate + ADP + H(+). Kinase that phosphorylates myo-inositol to produce multiple myo-inositol monophosphates. Participates in phytic acid biosynthesis in developing seeds. Phytic acid is the primary storage form of phosphorus in cereal grains and other plant seeds. This chain is Inositol 3-kinase, found in Arabidopsis thaliana (Mouse-ear cress).